A 277-amino-acid chain; its full sequence is Large ribosomal subunit protein uL2 (277 aa).

The interval 222 to 277 (GSVMNPNDHPHGGGEGKAPVGRKAPSTPWGKPALGLKTRNKKAKSDKLIVRRRNEK) is disordered. The span at 264–277 (AKSDKLIVRRRNEK) shows a compositional bias: basic and acidic residues.

It belongs to the universal ribosomal protein uL2 family. Part of the 50S ribosomal subunit. Forms a bridge to the 30S subunit in the 70S ribosome.

Its function is as follows. One of the primary rRNA binding proteins. Required for association of the 30S and 50S subunits to form the 70S ribosome, for tRNA binding and peptide bond formation. It has been suggested to have peptidyltransferase activity; this is somewhat controversial. Makes several contacts with the 16S rRNA in the 70S ribosome. In Streptococcus thermophilus (strain CNRZ 1066), this protein is Large ribosomal subunit protein uL2.